Here is a 367-residue protein sequence, read N- to C-terminus: Protein RecA (367 aa).

Position 73–80 (73–80 (GPESSGKT)) interacts with ATP. The segment at 345-367 (DEPVAKKASAKESKEAKELKEVE) is disordered.

It belongs to the RecA family.

The protein localises to the cytoplasm. Can catalyze the hydrolysis of ATP in the presence of single-stranded DNA, the ATP-dependent uptake of single-stranded DNA by duplex DNA, and the ATP-dependent hybridization of homologous single-stranded DNAs. It interacts with LexA causing its activation and leading to its autocatalytic cleavage. This chain is Protein RecA, found in Janthinobacterium sp. (strain Marseille) (Minibacterium massiliensis).